Here is a 310-residue protein sequence, read N- to C-terminus: p-hydroxybenzoic acid efflux pump subunit AaeA (310 aa).

Residues 12-32 form a helical membrane-spanning segment; sequence AITVVLVILAFIAIFNAWVYY.

Belongs to the membrane fusion protein (MFP) (TC 8.A.1) family.

The protein resides in the cell inner membrane. Its function is as follows. Forms an efflux pump with AaeB. This is p-hydroxybenzoic acid efflux pump subunit AaeA from Escherichia coli O9:H4 (strain HS).